Here is a 115-residue protein sequence, read N- to C-terminus: Phosphoribosyl-ATP pyrophosphatase (115 aa).

This sequence belongs to the PRA-PH family.

It is found in the cytoplasm. The enzyme catalyses 1-(5-phospho-beta-D-ribosyl)-ATP + H2O = 1-(5-phospho-beta-D-ribosyl)-5'-AMP + diphosphate + H(+). It participates in amino-acid biosynthesis; L-histidine biosynthesis; L-histidine from 5-phospho-alpha-D-ribose 1-diphosphate: step 2/9. In Saccharophagus degradans (strain 2-40 / ATCC 43961 / DSM 17024), this protein is Phosphoribosyl-ATP pyrophosphatase.